A 309-amino-acid chain; its full sequence is Porphobilinogen deaminase (309 aa).

At cysteine 242 the chain carries S-(dipyrrolylmethanemethyl)cysteine.

This sequence belongs to the HMBS family. As to quaternary structure, monomer. It depends on dipyrromethane as a cofactor.

The enzyme catalyses 4 porphobilinogen + H2O = hydroxymethylbilane + 4 NH4(+). It participates in porphyrin-containing compound metabolism; protoporphyrin-IX biosynthesis; coproporphyrinogen-III from 5-aminolevulinate: step 2/4. In terms of biological role, tetrapolymerization of the monopyrrole PBG into the hydroxymethylbilane pre-uroporphyrinogen in several discrete steps. In Actinobacillus succinogenes (strain ATCC 55618 / DSM 22257 / CCUG 43843 / 130Z), this protein is Porphobilinogen deaminase.